The primary structure comprises 264 residues: Thymidylate synthase (264 aa).

Arg-21 is a binding site for dUMP. A (6R)-5,10-methylene-5,6,7,8-tetrahydrofolate-binding site is contributed by His-51. 126–127 (RR) contacts dUMP. Catalysis depends on Cys-146, which acts as the Nucleophile. Residues 166 to 169 (RSAD), Asn-177, and 207 to 209 (HLY) each bind dUMP. Asp-169 contacts (6R)-5,10-methylene-5,6,7,8-tetrahydrofolate. A (6R)-5,10-methylene-5,6,7,8-tetrahydrofolate-binding site is contributed by Ala-263.

This sequence belongs to the thymidylate synthase family. Bacterial-type ThyA subfamily. In terms of assembly, homodimer.

It is found in the cytoplasm. It catalyses the reaction dUMP + (6R)-5,10-methylene-5,6,7,8-tetrahydrofolate = 7,8-dihydrofolate + dTMP. It participates in pyrimidine metabolism; dTTP biosynthesis. Catalyzes the reductive methylation of 2'-deoxyuridine-5'-monophosphate (dUMP) to 2'-deoxythymidine-5'-monophosphate (dTMP) while utilizing 5,10-methylenetetrahydrofolate (mTHF) as the methyl donor and reductant in the reaction, yielding dihydrofolate (DHF) as a by-product. This enzymatic reaction provides an intracellular de novo source of dTMP, an essential precursor for DNA biosynthesis. This is Thymidylate synthase from Nitrosomonas europaea (strain ATCC 19718 / CIP 103999 / KCTC 2705 / NBRC 14298).